We begin with the raw amino-acid sequence, 195 residues long: tRNA (pseudouridine(54)-N(1))-methyltransferase (195 aa).

Leu-129 provides a ligand contact to S-adenosyl-L-methionine.

The protein belongs to the methyltransferase superfamily. TrmY family. Homodimer.

It is found in the cytoplasm. It carries out the reaction pseudouridine(54) in tRNA + S-adenosyl-L-methionine = N(1)-methylpseudouridine(54) in tRNA + S-adenosyl-L-homocysteine + H(+). In terms of biological role, specifically catalyzes the N1-methylation of pseudouridine at position 54 (Psi54) in tRNAs. The sequence is that of tRNA (pseudouridine(54)-N(1))-methyltransferase from Methanocorpusculum labreanum (strain ATCC 43576 / DSM 4855 / Z).